The primary structure comprises 417 residues: D-galactonate dehydratase family member RspA (417 aa).

The substrate site is built by Gln-43 and His-127. Tyr-158 serves as the catalytic Proton donor/acceptor. Asp-223 is a Mg(2+) binding site. The active-site Proton donor/acceptor is His-225. Glu-249 and Glu-275 together coordinate Mg(2+). Residues Glu-275, Arg-296, His-325, Asp-329, and Glu-352 each contribute to the substrate site.

It belongs to the mandelate racemase/muconate lactonizing enzyme family. GalD subfamily. The cofactor is Mg(2+).

It carries out the reaction D-gluconate = 2-dehydro-3-deoxy-D-gluconate + H2O. Has low D-gluconate dehydratase activity (in vitro), suggesting that it has no significant role in D-gluconate degradation in vivo. Has no detectable activity with a panel of 70 other acid sugars (in vitro). The protein is D-galactonate dehydratase family member RspA (rspA) of Pantoea ananatis (strain LMG 20103).